The chain runs to 166 residues: 2-C-methyl-D-erythritol 2,4-cyclodiphosphate synthase (166 aa).

A divalent metal cation contacts are provided by Asp-15 and His-17. 4-CDP-2-C-methyl-D-erythritol 2-phosphate contacts are provided by residues 15-17 (DVH) and 43-44 (HS). Residue His-51 coordinates a divalent metal cation. Residues 65–67 (DIG), 141–144 (TTNE), and Arg-151 contribute to the 4-CDP-2-C-methyl-D-erythritol 2-phosphate site.

This sequence belongs to the IspF family. In terms of assembly, homotrimer. Requires a divalent metal cation as cofactor.

The enzyme catalyses 4-CDP-2-C-methyl-D-erythritol 2-phosphate = 2-C-methyl-D-erythritol 2,4-cyclic diphosphate + CMP. Its pathway is isoprenoid biosynthesis; isopentenyl diphosphate biosynthesis via DXP pathway; isopentenyl diphosphate from 1-deoxy-D-xylulose 5-phosphate: step 4/6. Its function is as follows. Involved in the biosynthesis of isopentenyl diphosphate (IPP) and dimethylallyl diphosphate (DMAPP), two major building blocks of isoprenoid compounds. Catalyzes the conversion of 4-diphosphocytidyl-2-C-methyl-D-erythritol 2-phosphate (CDP-ME2P) to 2-C-methyl-D-erythritol 2,4-cyclodiphosphate (ME-CPP) with a corresponding release of cytidine 5-monophosphate (CMP). The protein is 2-C-methyl-D-erythritol 2,4-cyclodiphosphate synthase of Synechococcus sp. (strain CC9311).